Here is an 84-residue protein sequence, read N- to C-terminus: Keratin-associated protein 19-4 (84 aa).

The protein belongs to the KRTAP type 19 family. In terms of assembly, interacts with hair keratins.

Its function is as follows. In the hair cortex, hair keratin intermediate filaments are embedded in an interfilamentous matrix, consisting of hair keratin-associated proteins (KRTAP), which are essential for the formation of a rigid and resistant hair shaft through their extensive disulfide bond cross-linking with abundant cysteine residues of hair keratins. The matrix proteins include the high-sulfur and high-glycine-tyrosine keratins. In Homo sapiens (Human), this protein is Keratin-associated protein 19-4 (KRTAP19-4).